Here is a 219-residue protein sequence, read N- to C-terminus: tRNA (guanine-N(7)-)-methyltransferase (219 aa).

S-adenosyl-L-methionine contacts are provided by Glu-43, Asp-68, Glu-101, and Asn-124. Substrate-binding residues include Lys-128 and Asp-160.

It belongs to the class I-like SAM-binding methyltransferase superfamily. TrmB family.

The catalysed reaction is guanosine(46) in tRNA + S-adenosyl-L-methionine = N(7)-methylguanosine(46) in tRNA + S-adenosyl-L-homocysteine. It functions in the pathway tRNA modification; N(7)-methylguanine-tRNA biosynthesis. Its function is as follows. Catalyzes the formation of N(7)-methylguanine at position 46 (m7G46) in tRNA. The protein is tRNA (guanine-N(7)-)-methyltransferase of Clostridium botulinum (strain Eklund 17B / Type B).